A 227-amino-acid chain; its full sequence is Cytochrome c oxidase subunit 2 (227 aa).

Over 1 to 14 (MAHAAQMGLQDATS) the chain is Mitochondrial intermembrane. A helical membrane pass occupies residues 15 to 45 (PIMEELISFHDHALMIIFLISFLVLYALFLT). Over 46–59 (LTTKLTNTNITDAQ) the chain is Mitochondrial matrix. The chain crosses the membrane as a helical span at residues 60–87 (EMETVWTILPAIILVLIALPSLRILYLT). The Mitochondrial intermembrane segment spans residues 88–227 (DEINDPSFTI…IFEMGPVFTL (140 aa)). Positions 161, 196, 198, 200, 204, and 207 each coordinate Cu cation. Residue E198 coordinates Mg(2+).

The protein belongs to the cytochrome c oxidase subunit 2 family. As to quaternary structure, component of the cytochrome c oxidase (complex IV, CIV), a multisubunit enzyme composed of 14 subunits. The complex is composed of a catalytic core of 3 subunits MT-CO1, MT-CO2 and MT-CO3, encoded in the mitochondrial DNA, and 11 supernumerary subunits COX4I, COX5A, COX5B, COX6A, COX6B, COX6C, COX7A, COX7B, COX7C, COX8 and NDUFA4, which are encoded in the nuclear genome. The complex exists as a monomer or a dimer and forms supercomplexes (SCs) in the inner mitochondrial membrane with NADH-ubiquinone oxidoreductase (complex I, CI) and ubiquinol-cytochrome c oxidoreductase (cytochrome b-c1 complex, complex III, CIII), resulting in different assemblies (supercomplex SCI(1)III(2)IV(1) and megacomplex MCI(2)III(2)IV(2)). Found in a complex with TMEM177, COA6, COX18, COX20, SCO1 and SCO2. Interacts with TMEM177 in a COX20-dependent manner. Interacts with COX20. Interacts with COX16. The cofactor is Cu cation.

It is found in the mitochondrion inner membrane. The enzyme catalyses 4 Fe(II)-[cytochrome c] + O2 + 8 H(+)(in) = 4 Fe(III)-[cytochrome c] + 2 H2O + 4 H(+)(out). Component of the cytochrome c oxidase, the last enzyme in the mitochondrial electron transport chain which drives oxidative phosphorylation. The respiratory chain contains 3 multisubunit complexes succinate dehydrogenase (complex II, CII), ubiquinol-cytochrome c oxidoreductase (cytochrome b-c1 complex, complex III, CIII) and cytochrome c oxidase (complex IV, CIV), that cooperate to transfer electrons derived from NADH and succinate to molecular oxygen, creating an electrochemical gradient over the inner membrane that drives transmembrane transport and the ATP synthase. Cytochrome c oxidase is the component of the respiratory chain that catalyzes the reduction of oxygen to water. Electrons originating from reduced cytochrome c in the intermembrane space (IMS) are transferred via the dinuclear copper A center (CU(A)) of subunit 2 and heme A of subunit 1 to the active site in subunit 1, a binuclear center (BNC) formed by heme A3 and copper B (CU(B)). The BNC reduces molecular oxygen to 2 water molecules using 4 electrons from cytochrome c in the IMS and 4 protons from the mitochondrial matrix. This Symphalangus syndactylus (Siamang) protein is Cytochrome c oxidase subunit 2 (MT-CO2).